The chain runs to 374 residues: GDSL esterase/lipase At1g71250 (374 aa).

The N-terminal stretch at 1–28 (MNTNRKKMKVHIGGYVLILALTVSVILQ) is a signal peptide. Residue Ser-48 is the Nucleophile of the active site. N-linked (GlcNAc...) asparagine glycosylation is present at Asn-162. Residues Asp-338 and His-341 contribute to the active site.

The protein belongs to the 'GDSL' lipolytic enzyme family.

Its subcellular location is the secreted. This is GDSL esterase/lipase At1g71250 from Arabidopsis thaliana (Mouse-ear cress).